Reading from the N-terminus, the 21-residue chain is FFPFVINELAKLPSLISLLKK.

The residue at position 21 (Lys21) is a Lysine amide.

As to expression, expressed by the skin glands.

The protein localises to the secreted. In terms of biological role, antimicrobial peptide. This Nidirana okinavana (Kampira Falls frog) protein is Brevinin-1OKb.